Consider the following 165-residue polypeptide: Nucleotide-binding protein Rcas_1283 (165 aa).

It belongs to the YajQ family.

Nucleotide-binding protein. This chain is Nucleotide-binding protein Rcas_1283, found in Roseiflexus castenholzii (strain DSM 13941 / HLO8).